The sequence spans 216 residues: Probable nicotinate-nucleotide adenylyltransferase (216 aa).

The protein belongs to the NadD family.

The enzyme catalyses nicotinate beta-D-ribonucleotide + ATP + H(+) = deamido-NAD(+) + diphosphate. The protein operates within cofactor biosynthesis; NAD(+) biosynthesis; deamido-NAD(+) from nicotinate D-ribonucleotide: step 1/1. Functionally, catalyzes the reversible adenylation of nicotinate mononucleotide (NaMN) to nicotinic acid adenine dinucleotide (NaAD). This is Probable nicotinate-nucleotide adenylyltransferase from Geobacillus thermodenitrificans (strain NG80-2).